The following is a 241-amino-acid chain: Pyridoxine 5'-phosphate synthase (241 aa).

Residue Asn7 participates in 3-amino-2-oxopropyl phosphate binding. A 1-deoxy-D-xylulose 5-phosphate-binding site is contributed by 9–10; the sequence is DH. Arg18 lines the 3-amino-2-oxopropyl phosphate pocket. The active-site Proton acceptor is the His43. 1-deoxy-D-xylulose 5-phosphate is bound by residues Arg45 and His50. The active-site Proton acceptor is the Glu70. Thr100 lines the 1-deoxy-D-xylulose 5-phosphate pocket. The active-site Proton donor is the His191. 3-amino-2-oxopropyl phosphate-binding positions include Gly192 and 213–214; that span reads GH.

This sequence belongs to the PNP synthase family. As to quaternary structure, homooctamer; tetramer of dimers.

The protein resides in the cytoplasm. The catalysed reaction is 3-amino-2-oxopropyl phosphate + 1-deoxy-D-xylulose 5-phosphate = pyridoxine 5'-phosphate + phosphate + 2 H2O + H(+). It functions in the pathway cofactor biosynthesis; pyridoxine 5'-phosphate biosynthesis; pyridoxine 5'-phosphate from D-erythrose 4-phosphate: step 5/5. Functionally, catalyzes the complicated ring closure reaction between the two acyclic compounds 1-deoxy-D-xylulose-5-phosphate (DXP) and 3-amino-2-oxopropyl phosphate (1-amino-acetone-3-phosphate or AAP) to form pyridoxine 5'-phosphate (PNP) and inorganic phosphate. This Maridesulfovibrio salexigens (strain ATCC 14822 / DSM 2638 / NCIMB 8403 / VKM B-1763) (Desulfovibrio salexigens) protein is Pyridoxine 5'-phosphate synthase.